Consider the following 492-residue polypeptide: MTENKGTPEVGWSFDTRYTDLPSMMFSNVEPEPVEAPKLVILNDSLAQSLGLDPVALQHQNSIAVLAGNEVPKGAAPLAQAYAGHQFGHFTMLGDGRAILLGEQITPNGERFDIQLKGSGRTPYSRQGDGRAALGPMLREYIISEAMHALGIPTTRSLAVVTTGESVFRETVLPGAILTRVAASHIRVGTFQFVANAGSEEELKALADYTLARHFPEVEADRENRYLALLQKVIKRQAELIAKWQLVGFIHGVMNTDNMTISGETIDYGPCAFMDVYDPETVFSSIDTRGRYAYGNQPRIGAWNLARFAEALLPLLADDQDEAIKLAEAEISNYAEQFEHHWLNGMRAKLGLFNEESEDLSLIKDLLEVMHKHKADFTNTFRALTFDEQEETGLHDKLEFTEWHERWQARLGRQEQTKDDSHNLMKMSNPAVIPRNHRVEEALEAAVEQEDYQVMERLLKVLANPFAHSPEQKAYAKLPAPCAIPYRTYCGT.

ATP is bound by residues G94, G96, R97, K117, D129, G130, R180, and R187. D257 serves as the catalytic Proton acceptor. The Mg(2+) site is built by N258 and D267. Residue D267 coordinates ATP.

Belongs to the SELO family. Mg(2+) serves as cofactor. The cofactor is Mn(2+).

The enzyme catalyses L-seryl-[protein] + ATP = 3-O-(5'-adenylyl)-L-seryl-[protein] + diphosphate. The catalysed reaction is L-threonyl-[protein] + ATP = 3-O-(5'-adenylyl)-L-threonyl-[protein] + diphosphate. It catalyses the reaction L-tyrosyl-[protein] + ATP = O-(5'-adenylyl)-L-tyrosyl-[protein] + diphosphate. It carries out the reaction L-histidyl-[protein] + UTP = N(tele)-(5'-uridylyl)-L-histidyl-[protein] + diphosphate. The enzyme catalyses L-seryl-[protein] + UTP = O-(5'-uridylyl)-L-seryl-[protein] + diphosphate. The catalysed reaction is L-tyrosyl-[protein] + UTP = O-(5'-uridylyl)-L-tyrosyl-[protein] + diphosphate. In terms of biological role, nucleotidyltransferase involved in the post-translational modification of proteins. It can catalyze the addition of adenosine monophosphate (AMP) or uridine monophosphate (UMP) to a protein, resulting in modifications known as AMPylation and UMPylation. In Halalkalibacterium halodurans (strain ATCC BAA-125 / DSM 18197 / FERM 7344 / JCM 9153 / C-125) (Bacillus halodurans), this protein is Protein nucleotidyltransferase YdiU.